Consider the following 688-residue polypeptide: Glycine--tRNA ligase beta subunit (688 aa).

It belongs to the class-II aminoacyl-tRNA synthetase family. Tetramer of two alpha and two beta subunits.

Its subcellular location is the cytoplasm. It carries out the reaction tRNA(Gly) + glycine + ATP = glycyl-tRNA(Gly) + AMP + diphosphate. This chain is Glycine--tRNA ligase beta subunit, found in Chromohalobacter salexigens (strain ATCC BAA-138 / DSM 3043 / CIP 106854 / NCIMB 13768 / 1H11).